The following is an 80-amino-acid chain: Ubiquinol-cytochrome c reductase complex assembly factor 5 (80 aa).

Residues 1-19 (MFSRAQVRRALQRVPGKQR) are Mitochondrial matrix-facing. A helical membrane pass occupies residues 20 to 41 (FGIYRFLPFFFVLGGAMEWIMI). At 42 to 80 (KVRVGQETFYDVYRRKASERQYQRRLEDTSETNLHKLIK) the chain is on the mitochondrial intermembrane side.

Belongs to the UQCC5 family. As to quaternary structure, associates with the mitochondrial ribosome. Interacts with UQCC6. Interacts with MT-CYB; interacts with newly synthesizes MT-CYB. Forms a complex, named COMB/coordinator of mitochondrial CYTB biogenesis, composed of UQCC1, UQCC2, UQCC4, UQCC5 and UQCC6; stabilizes nascent cytochrome b/MT-CYB and promotes its membrane insertion.

It is found in the mitochondrion inner membrane. Its function is as follows. Required for the assembly and stability of the mitochondrial ubiquinol-cytochrome c reductase complex (complex III (CIII) or cytochrome b-c1 complex), a multisubunit transmembrane complex that is part of the mitochondrial electron transport chain (ETC) which drives oxidative phosphorylation. Mediates early complex III biogenesis. Participates in regulating the levels of electron transport chain proteins, and therefore energy supply, in response to changes in energy demand. Also required for cytochrome c oxidase complex (complex IV) assembly. This Mus musculus (Mouse) protein is Ubiquinol-cytochrome c reductase complex assembly factor 5.